Reading from the N-terminus, the 477-residue chain is Kinesin-like protein KIN-1 (477 aa).

A Kinesin motor domain is found at 3–330 (NVTVCVRFRP…VRFGTRTKLI (328 aa)). 86–93 (GQTGAGKT) provides a ligand contact to ATP. Residues 402–451 (QDAASQEVSLLTQAVEELKETVEELTDENERLRGELELAQEAAAAAAAAR) are a coiled coil.

It belongs to the TRAFAC class myosin-kinesin ATPase superfamily. Kinesin family. KIN-1 subfamily. As to expression, widely expressed. Expressed in young roots and leaves, in mature roots, culm, sheath and leaves, and in panicles at various developmental stages. Strongest expression is detected in panicles. In the panicle, expression is detected in anthers, glumme, lemma and palea. In the spikelet, expression is detected in both microsporocyte and the anther walls.

The protein resides in the cytoplasm. Kinesin-like motor protein that exhibits microtubule-stimulated ATPase activity. Plays an essential role in male meiotic chromosomal dynamics, male gametogenesis and anther dehiscence. May play a minor and nonessential role in regulating meiotic spindle formation. This Oryza sativa subsp. japonica (Rice) protein is Kinesin-like protein KIN-1.